A 251-amino-acid polypeptide reads, in one-letter code: 1-(5-phosphoribosyl)-5-[(5-phosphoribosylamino)methylideneamino] imidazole-4-carboxamide isomerase (251 aa).

The Proton acceptor role is filled by Asp-8. The active-site Proton donor is Asp-131.

The protein belongs to the HisA/HisF family.

It is found in the cytoplasm. It carries out the reaction 1-(5-phospho-beta-D-ribosyl)-5-[(5-phospho-beta-D-ribosylamino)methylideneamino]imidazole-4-carboxamide = 5-[(5-phospho-1-deoxy-D-ribulos-1-ylimino)methylamino]-1-(5-phospho-beta-D-ribosyl)imidazole-4-carboxamide. Its pathway is amino-acid biosynthesis; L-histidine biosynthesis; L-histidine from 5-phospho-alpha-D-ribose 1-diphosphate: step 4/9. The protein is 1-(5-phosphoribosyl)-5-[(5-phosphoribosylamino)methylideneamino] imidazole-4-carboxamide isomerase of Azoarcus sp. (strain BH72).